Consider the following 85-residue polypeptide: Large ribosomal subunit protein bL27 (85 aa).

The interval 1–20 (MAHKKAGGSTRNGRDSEAKR) is disordered.

This sequence belongs to the bacterial ribosomal protein bL27 family.

The polypeptide is Large ribosomal subunit protein bL27 (Salmonella agona (strain SL483)).